The primary structure comprises 391 residues: Probable FAD-dependent oxidoreductase PA4991 (391 aa).

FAD contacts are provided by residues A17, E36, 44–45, 49–51, and 346–347; these read QS, QGI, and LA.

It belongs to the DAO family. In terms of assembly, monomer. FAD is required as a cofactor.

Probably functions as a FAD-dependent oxidoreductase, whose physiological substrate is unknown. Does not display amino-acid oxidase or glycerol-3-phosphate dehydrogenase activities. Is essential for growth of P.aeruginosa in the sputum of cystic fibrosis patients. This is Probable FAD-dependent oxidoreductase PA4991 from Pseudomonas aeruginosa (strain ATCC 15692 / DSM 22644 / CIP 104116 / JCM 14847 / LMG 12228 / 1C / PRS 101 / PAO1).